A 428-amino-acid polypeptide reads, in one-letter code: MKIYKLQTPVNAILENIAADKSISHRFAIFSLLTQEENKAQNYLLAQDTLNTLEIIKNLGAKIEQKDSCVKIIPPKEILSPNCILDCGNSGTAMRLMIGFLAGISGFFVLSGDKYLNNRPMRRISKPLTQIGARIYGRNEANLAPLCIEGQKLKAFNFKSEISSAQVKTAMILSAFRADNVCTFSEISLSRNHSENMLKAMKAPIRVSNDGLSLEINPLKKPLKAQNIIIPNDPSSAFYFVLAAIILPKSQIILKNILLNPTRIEAYKILQKMGAKLEMTITQNDFETIGEIRVESSKLNGIEVKDNIAWLIDEAPALAIAFALAKGKSSLINAKELRVKESDRIAVMVENLKLCGVEARELDDGFEIEGGCELKSSKIKSYGDHRIAMSFAILGLLCGIEIDDSDCIKTSFPNFIEILSNLGARIDY.

Positions 21, 22, and 26 each coordinate 3-phosphoshikimate. Position 21 (K21) interacts with phosphoenolpyruvate. The phosphoenolpyruvate site is built by G91 and R119. 3-phosphoshikimate is bound by residues S164, Q166, D313, and K340. Residue Q166 participates in phosphoenolpyruvate binding. Residue D313 is the Proton acceptor of the active site. Residues R344 and R386 each coordinate phosphoenolpyruvate.

It belongs to the EPSP synthase family. Monomer.

It is found in the cytoplasm. It carries out the reaction 3-phosphoshikimate + phosphoenolpyruvate = 5-O-(1-carboxyvinyl)-3-phosphoshikimate + phosphate. The protein operates within metabolic intermediate biosynthesis; chorismate biosynthesis; chorismate from D-erythrose 4-phosphate and phosphoenolpyruvate: step 6/7. Its function is as follows. Catalyzes the transfer of the enolpyruvyl moiety of phosphoenolpyruvate (PEP) to the 5-hydroxyl of shikimate-3-phosphate (S3P) to produce enolpyruvyl shikimate-3-phosphate and inorganic phosphate. The protein is 3-phosphoshikimate 1-carboxyvinyltransferase of Campylobacter jejuni subsp. jejuni serotype O:2 (strain ATCC 700819 / NCTC 11168).